Consider the following 300-residue polypeptide: Mycothiol acetyltransferase (300 aa).

N-acetyltransferase domains lie at 4-140 (IDWR…RPLT) and 151-300 (VRLA…AVAD). Residue aspartate 36 participates in 1D-myo-inositol 2-(L-cysteinylamino)-2-deoxy-alpha-D-glucopyranoside binding. 79–81 (LVV) is an acetyl-CoA binding site. The 1D-myo-inositol 2-(L-cysteinylamino)-2-deoxy-alpha-D-glucopyranoside site is built by glutamate 178, lysine 219, and glutamate 227. 231 to 233 (VGV) lines the acetyl-CoA pocket. Residue tyrosine 269 participates in 1D-myo-inositol 2-(L-cysteinylamino)-2-deoxy-alpha-D-glucopyranoside binding. 274 to 279 (NGAAVK) lines the acetyl-CoA pocket.

This sequence belongs to the acetyltransferase family. MshD subfamily. Monomer.

It catalyses the reaction 1D-myo-inositol 2-(L-cysteinylamino)-2-deoxy-alpha-D-glucopyranoside + acetyl-CoA = mycothiol + CoA + H(+). In terms of biological role, catalyzes the transfer of acetyl from acetyl-CoA to desacetylmycothiol (Cys-GlcN-Ins) to form mycothiol. This Mycobacterium sp. (strain JLS) protein is Mycothiol acetyltransferase.